The primary structure comprises 484 residues: Glutathione reductase (484 aa).

FAD-binding residues include serine 32 and glycine 33. Residue serine 32 coordinates glutathione. Residue arginine 39 participates in glutathione binding. FAD is bound by residues glutamate 52, threonine 59, cysteine 60, and lysine 68. Cysteine 60 and cysteine 65 form a disulfide bridge. A glutathione-binding site is contributed by tyrosine 122. Alanine 138 contributes to the FAD binding site. Positions 204, 207, 210, 227, and 233 each coordinate NADP(+). Glutathione is bound at residue threonine 242. Glycine 293 serves as a coordination point for NADP(+). Aspartate 333 serves as a coordination point for FAD. An NADP(+)-binding site is contributed by glutamate 339. Threonine 341 lines the FAD pocket. Residue arginine 349 participates in glutathione binding. Residue valine 374 participates in NADP(+) binding. Lysine 426 contributes to the glutathione binding site. FAD is bound at residue histidine 473. Histidine 473 serves as the catalytic Proton acceptor.

It belongs to the class-I pyridine nucleotide-disulfide oxidoreductase family. In terms of assembly, homodimer. FAD is required as a cofactor.

Its subcellular location is the cytoplasm. The protein localises to the mitochondrion. It catalyses the reaction 2 glutathione + NADP(+) = glutathione disulfide + NADPH + H(+). Its function is as follows. Catalyzes the reduction of glutathione disulfide (GSSG) to reduced glutathione (GSH). Constitutes the major mechanism to maintain a high GSH:GSSG ratio in the cytosol. The polypeptide is Glutathione reductase (GLR1) (Kluyveromyces lactis (strain ATCC 8585 / CBS 2359 / DSM 70799 / NBRC 1267 / NRRL Y-1140 / WM37) (Yeast)).